A 183-amino-acid chain; its full sequence is MADSENQGPAEPSQAAAAAEAAAEEVMAEGGAQGGDCDSAAGDPDSAAGEMAEEPQTPAENAPKPKNDFIESLPNSVKCRVLALKKLQKRCDKIEAKFDKEFQALEKKYNDIYKPLLAKIQELTGEMEGCAWTLEGEEEEEEEYEDDEEEGEEEEEEEEAAAEAAAGAKHDDAHAEMPDDAKK.

The interval 1–71 (MADSENQGPA…APKPKNDFIE (71 aa)) is disordered. 2 stretches are compositionally biased toward low complexity: residues 7-21 (QGPA…AAEA) and 28-49 (AEGG…SAAG). A coiled-coil region spans residues 81–107 (VLALKKLQKRCDKIEAKFDKEFQALEK). Residues 135–161 (EGEEEEEEEYEDDEEEGEEEEEEEEAA) show a composition bias toward acidic residues. The interval 135–183 (EGEEEEEEEYEDDEEEGEEEEEEEEAAAEAAAGAKHDDAHAEMPDDAKK) is disordered. Positions 168-183 (AKHDDAHAEMPDDAKK) are enriched in basic and acidic residues.

Belongs to the nucleosome assembly protein (NAP) family.

The protein localises to the nucleus. The sequence is that of Nucleosome assembly protein 1-like 5 (NAP1L5) from Pongo abelii (Sumatran orangutan).